The sequence spans 412 residues: Argininosuccinate synthase (412 aa).

Position 10–18 (10–18) interacts with ATP; it reads AYSGGLDTS. L-citrulline is bound at residue Tyr-89. Gly-119 serves as a coordination point for ATP. L-aspartate contacts are provided by Thr-121, Asn-125, and Asp-126. Asn-125 is an L-citrulline binding site. Residues Arg-129, Ser-177, Glu-261, and Tyr-273 each contribute to the L-citrulline site.

This sequence belongs to the argininosuccinate synthase family. Type 1 subfamily. Homotetramer.

The protein localises to the cytoplasm. It catalyses the reaction L-citrulline + L-aspartate + ATP = 2-(N(omega)-L-arginino)succinate + AMP + diphosphate + H(+). Its pathway is amino-acid biosynthesis; L-arginine biosynthesis; L-arginine from L-ornithine and carbamoyl phosphate: step 2/3. The sequence is that of Argininosuccinate synthase from Bifidobacterium longum (strain DJO10A).